The chain runs to 373 residues: MKVPFLQLLCLNAALASANVVKGAAQGFAAGVTGGGDITPSYPKTNEELVSLLESDEPQVVVLTKTFEFIGTEGTTTENGCAPWGTGKSCQLAINSNGWCGKNPVVTITYDNAAKNGIHIKSNKTLVGEGDKGVLSGKGLYFEGGVSNIIVQNIKITNLNPGFVWGGDAFTFFGADLIWIDHCETSLTGRQHYVTGFHPNTRMTWSNNFLNGVTTHSAGCDDHHYWTMELVGPGDQITFQNNYVYHTTGRGPALSGTTLFHAVNSVWSSIPGHAIEGGDKGRGLFEGCFFEDVVEIAPAKPENQLFSASEANAASCKSALGRACQANSYSKSGAFGSSETGFFKDFAGLTIAPAGSATDALAYVPKNCGIGRL.

Residues 1–18 form the signal peptide; the sequence is MKVPFLQLLCLNAALASA. 2 disulfide bridges follow: cysteine 81-cysteine 100 and cysteine 90-cysteine 220. Asparagine 123 carries N-linked (GlcNAc...) asparagine glycosylation. Arginine 250 is an active-site residue. Cysteine 316 and cysteine 324 form a disulfide bridge.

The protein belongs to the polysaccharide lyase 1 family.

It is found in the secreted. It carries out the reaction Eliminative cleavage of (1-&gt;4)-alpha-D-galacturonan methyl ester to give oligosaccharides with 4-deoxy-6-O-methyl-alpha-D-galact-4-enuronosyl groups at their non-reducing ends.. Pectinolytic enzymes consist of four classes of enzymes: pectin lyase, polygalacturonase, pectin methylesterase and rhamnogalacturonase. Among pectinolytic enzymes, pectin lyase is the most important in depolymerization of pectin, since it cleaves internal glycosidic bonds of highly methylated pectins. This chain is Probable pectin lyase C (pelC), found in Aspergillus niger (strain ATCC MYA-4892 / CBS 513.88 / FGSC A1513).